A 204-amino-acid polypeptide reads, in one-letter code: MAQYTKAMGTVRKYTPATLKRDGKPAFVYVYRHLQTGQVAYTQVPGVTEHHLNRQFKDPNWENKRPTMRQDLWRPMAVADFGDHQAACDAYDGLVYLRYKRTHDGKKDIKGWRKTNAAGNVWQDGQYRPVYTQEALADLSTVTEAVKVPVTIHWEDLWRRGAAESWPENADHSVLKRWDAIYPQSLEKRLAKEAKVPGETTAEQ.

This sequence belongs to the mitochondrion-specific ribosomal protein mL67 family.

It localises to the nucleus. The protein localises to the mitochondrion. In terms of biological role, transcription factor involved in regulation of RNA polymerase II-dependent transcription. Also involved in regulation of mitochondrial DNA recombination, maintenance and repair, and generation of homoplasmic cells. In Yarrowia lipolytica (strain CLIB 122 / E 150) (Yeast), this protein is Large ribosomal subunit protein mL67 (MHR1).